Consider the following 196-residue polypeptide: GTP cyclohydrolase 1 (196 aa).

3 residues coordinate Zn(2+): Cys85, His88, and Cys158.

This sequence belongs to the GTP cyclohydrolase I family. As to quaternary structure, homomer.

The enzyme catalyses GTP + H2O = 7,8-dihydroneopterin 3'-triphosphate + formate + H(+). The protein operates within cofactor biosynthesis; 7,8-dihydroneopterin triphosphate biosynthesis; 7,8-dihydroneopterin triphosphate from GTP: step 1/1. In Corynebacterium aurimucosum (strain ATCC 700975 / DSM 44827 / CIP 107346 / CN-1) (Corynebacterium nigricans), this protein is GTP cyclohydrolase 1.